Here is a 238-residue protein sequence, read N- to C-terminus: Protein lifeguard 4 (238 aa).

Residues 1-38 lie on the Cytoplasmic side of the membrane; that stretch reads MADTDPGYPRSSIEDDFNYGSCVASASVHIRMAFLRKV. A helical membrane pass occupies residues 39–59; that stretch reads YSILSLQVLLTTVTSALFLYF. The Lumenal segment spans residues 60–68; sequence QALRTFVHE. The helical transmembrane segment at 69–89 threads the bilayer; it reads SPALIVVFALGSLGLIFALTL. At 90–97 the chain is on the cytoplasmic side; the sequence is HRHTHPLN. A helical transmembrane segment spans residues 98–118; that stretch reads LYLLFAFTLSESLAVAAVVTF. The Lumenal portion of the chain corresponds to 119–120; that stretch reads YD. The chain crosses the membrane as a helical span at residues 121–141; it reads VYLVLQAFIMTTAVFLGLTAY. Topologically, residues 142-151 are cytoplasmic; it reads TLQSKRDFTK. Residues 152–172 traverse the membrane as a helical segment; that stretch reads FGAGLFAGLWILCLAGFLKLF. Residues 173-175 are Lumenal-facing; it reads FYS. The helical transmembrane segment at 176 to 196 threads the bilayer; sequence ETMELVLASLGALLFCGFIIY. At 197 to 208 the chain is on the cytoplasmic side; the sequence is DTHSLMHRLSPE. An intramembrane region (helical) is located at residues 209 to 229; the sequence is EYVIAAISLYMDIINLFLHLL. The Cytoplasmic portion of the chain corresponds to 230-238; the sequence is KFLEAVNKK.

This sequence belongs to the BI1 family. LFG subfamily. In terms of assembly, interacts with ITPR3.

The protein resides in the golgi apparatus membrane. In terms of biological role, anti-apoptotic protein which can inhibit apoptosis induced by intrinsic and extrinsic apoptotic stimuli. Can modulate both capacitative Ca2+ entry and inositol 1,4,5-trisphosphate (IP3)-mediated Ca2+ release. This is Protein lifeguard 4 (Tmbim4) from Mus musculus (Mouse).